We begin with the raw amino-acid sequence, 220 residues long: Adenylate kinase (220 aa).

Gly-12–Thr-17 provides a ligand contact to ATP. The segment at Ser-32–Val-62 is NMP. AMP is bound by residues Thr-33, Arg-38, Glu-60 to Val-62, Gly-88 to Arg-91, and Gln-95. Residues Ala-129–Asp-166 form an LID region. Arg-130 lines the ATP pocket. The Zn(2+) site is built by Cys-133 and Cys-136. Position 139–140 (Ile-139–Tyr-140) interacts with ATP. Zn(2+)-binding residues include Cys-153 and Cys-156. AMP-binding residues include Arg-163 and Arg-174. Ile-202 lines the ATP pocket.

This sequence belongs to the adenylate kinase family. In terms of assembly, monomer.

It localises to the cytoplasm. It carries out the reaction AMP + ATP = 2 ADP. Its pathway is purine metabolism; AMP biosynthesis via salvage pathway; AMP from ADP: step 1/1. In terms of biological role, catalyzes the reversible transfer of the terminal phosphate group between ATP and AMP. Plays an important role in cellular energy homeostasis and in adenine nucleotide metabolism. The protein is Adenylate kinase of Thermotoga petrophila (strain ATCC BAA-488 / DSM 13995 / JCM 10881 / RKU-1).